The chain runs to 657 residues: N-acetylgalactosaminyltransferase 7 (657 aa).

Topologically, residues 1 to 6 (MRLKIG) are cytoplasmic. A helical; Signal-anchor for type II membrane protein transmembrane segment spans residues 7–29 (FILRSLLVVGSFLGLVVLWSSLT). The Lumenal portion of the chain corresponds to 30–657 (PRPDDPSPLS…KWEMNNIHSV (628 aa)). The interval 31–66 (RPDDPSPLSRMREDRDVNDPMPNRGGNGLAPGEDRF) is disordered. 5 cysteine pairs are disulfide-bonded: C197–C435, C426–C507, C545–C562, C585–C600, and C625–C640. Positions 206–317 (LLTSSVVIVF…VNWYAPLVAP (112 aa)) are catalytic subdomain A. Positions 247 and 277 each coordinate substrate. Mn(2+) contacts are provided by D301 and H303. The segment at 381-443 (PYRSPAMAGG…PCSRVGHIYR (63 aa)) is catalytic subdomain B. W412 serves as a coordination point for substrate. H440 is a Mn(2+) binding site. R443 lines the substrate pocket. The 121-residue stretch at 532 to 652 (VDWGEIRGFE…SKTTQKWEMN (121 aa)) folds into the Ricin B-type lectin domain.

This sequence belongs to the glycosyltransferase 2 family. GalNAc-T subfamily. It depends on Mn(2+) as a cofactor.

It is found in the golgi apparatus membrane. It catalyses the reaction L-seryl-[protein] + UDP-N-acetyl-alpha-D-galactosamine = a 3-O-[N-acetyl-alpha-D-galactosaminyl]-L-seryl-[protein] + UDP + H(+). The enzyme catalyses L-threonyl-[protein] + UDP-N-acetyl-alpha-D-galactosamine = a 3-O-[N-acetyl-alpha-D-galactosaminyl]-L-threonyl-[protein] + UDP + H(+). Its pathway is protein modification; protein glycosylation. Functionally, glycopeptide transferase involved in O-linked oligosaccharide biosynthesis, which catalyzes the transfer of an N-acetyl-D-galactosamine residue to an already glycosylated peptide. In contrast to other proteins of the family, it does not act as a peptide transferase that transfers GalNAc onto serine or threonine residue on the protein receptor, but instead requires the prior addition of a GalNAc on a peptide before adding additional GalNAc moieties. Some peptide transferase activity is however not excluded, considering that its appropriate peptide substrate may remain unidentified. The sequence is that of N-acetylgalactosaminyltransferase 7 (GALNT7) from Pongo abelii (Sumatran orangutan).